The sequence spans 389 residues: Flagellar P-ring protein (389 aa).

An N-terminal signal peptide occupies residues 1-33; the sequence is MRPLVAARRRAAACCALAACMLALAFAPAAARA.

Belongs to the FlgI family. In terms of assembly, the basal body constitutes a major portion of the flagellar organelle and consists of four rings (L,P,S, and M) mounted on a central rod.

It localises to the periplasm. Its subcellular location is the bacterial flagellum basal body. Assembles around the rod to form the L-ring and probably protects the motor/basal body from shearing forces during rotation. The protein is Flagellar P-ring protein of Burkholderia pseudomallei (strain K96243).